The primary structure comprises 214 residues: Single-pass membrane and coiled-coil domain-containing protein 1 (214 aa).

The stretch at 5 to 40 (TTTLISLKEAMKRVDNKLRALDTQFKELDVTKDNLT) forms a coiled coil. Residues 59–81 (IWTAALALGFTSMELNIVYSYVI) form a helical membrane-spanning segment. The segment at 193–214 (KQAQDPENSRAPLKELMPPVKD) is disordered.

It localises to the membrane. This is Single-pass membrane and coiled-coil domain-containing protein 1 (Smco1) from Mus musculus (Mouse).